The chain runs to 972 residues: Aminopeptidase N (972 aa).

Over threonine 2–arginine 17 the chain is Cytoplasmic. The helical; Signal-anchor for type II membrane protein transmembrane segment at leucine 18 to phenylalanine 39 threads the bilayer. Residues threonine 40 to leucine 972 are Extracellular-facing. Residues serine 47–asparagine 62 are compositionally biased toward basic and acidic residues. The interval serine 47–alanine 66 is disordered. The N-linked (GlcNAc...) asparagine glycan is linked to asparagine 99. Substrate is bound at residue glutamate 208. Asparagine 227 carries N-linked (GlcNAc...) asparagine glycosylation. Glycine 343 to asparagine 347 is a substrate binding site. Histidine 379 contributes to the Zn(2+) binding site. Catalysis depends on glutamate 380, which acts as the Proton acceptor. Zn(2+) is bound by residues histidine 383 and glutamate 402. Asparagine 549 carries N-linked (GlcNAc...) asparagine glycosylation. 2 cysteine pairs are disulfide-bonded: cysteine 759–cysteine 766 and cysteine 804–cysteine 840. An N-linked (GlcNAc...) asparagine glycan is attached at asparagine 858.

This sequence belongs to the peptidase M1 family. Zn(2+) is required as a cofactor.

It localises to the membrane. It carries out the reaction Release of an N-terminal amino acid, Xaa-|-Yaa- from a peptide, amide or arylamide. Xaa is preferably Ala, but may be most amino acids including Pro (slow action). When a terminal hydrophobic residue is followed by a prolyl residue, the two may be released as an intact Xaa-Pro dipeptide.. The protein is Aminopeptidase N of Haemonchus contortus (Barber pole worm).